Consider the following 1853-residue polypeptide: MALVGVDFQAPLRTVCRVQFGILGPEEIKRMSVAHVEFPEVYENGKPKMGGLMDPRQGVIDRRGRCMTCAGNLTDCPGHFGHLELAKPVFHIGFLTKSLKILRCVCFYCGRLLIDKTNPRVMDILKKTSGNPKKRLALIYDLCKSKSVCEGAAEKEDGLPDDMDDPMNEGKKVPAGCGRYQPSYRRVGIDINAEWKKNVNEDTQERKIMLTAERVLEVFKQITDEDILVIGMDPQFARPEWMICTVLPVPPLAVRPAVVTFGSAKNQDDLTHKLSDIIKTNQQLQRNEANGAAAHVLTDDVRLLQYHVATLVDNCIPGLPTATQKGGRPLKSIKQRLKGKEGRIRGNLMGKRVDFSARTVITADPNLPIDTVGVPRTIAQNLTFPEIVTPFNVDKLQELVNRGDTQYPGAKYIIRENGARVDLRYHPRAADLHLQPGYRVERHMKDGDIIVFNRQPTLHKMSMMGHRVKILPWSTFRMNLSVTSPYNADFDGDEMNLHLPQSLETRAEIEEIAMVPRQLITPQANKPVMGIVQDTLCAVRMMTKRDIFIDWPFMMDLLMYLPTWDGKVPQPAILKPKPLWTGKQVFSLIIPGNVNVLRTHSTHPDSEDSGPYKWISPGDTKVLIEHGELLSGIVCSKTVGKSAGNLLHVVALELGHEIAANFYSHIQTVINAWLLREGHTIGIGDTIADQSTYLDIQNTIRKAKQDVVDVIEKAHNDDLEPTPGNTLRQTFENKVNQILNDARDRTGSSAQKSLSEFNNFKSMVVSGSKGSKINISQVIACVGQQNVEGKRIPFGFRHRTLPHFIKDDYGPESKGFVENSYLAGLTPSEFFFHAMGGREGLIDTAVKTAETGYIQRRLIKAMESVMVNYDGTVRNSLAQMVQLRYGEDGLDGMWVENQNMPTMKPNNAVFERDFRMDLTDNKFLRKNYSEDVVREIQEAQDGISLVESEWSQLEEDRRLLRKIFPRGDAKIVLPCNLQRLIWNAQKIFKVDLRKPVNLSPLHVINGVRELSKKLIIVSGNDEISKQAQYNATLLMNILLRSTLCTKKMCTSAKLNTEAFDWLLGEIETRFQQAIAQPGEMVGALAAQSLGEPATQMTLNTFHYAGVSAKNVTLGVPRLKEIINVSKQLKTPSLTVFLTGAAAKDPEKAKDVLCKLEHTTLKKVTCNTAIYYDPDPKNTVIAEDEEWVSIFYEMPDHDLTRTSPWLLRIELDRKRMVDKKLTMEMIADRIHGGFGQDVHTIYTDDNAEKLVFRLRIAGEDKGAEGQEEQVDKMEDDVFLRCIEANMLSDLTLQGIPAISKVYMNQPNTDDKKRIIITPEGGFKAVADWILETDGTALLRVLSERQIDPVRTTSNDICEIFEVLGIEAVRKSIEKEMDNVISFDGSYVNYRHLALLCDVMTAKGHLMAITRHGINRQEVGALMRCSFEETVDILMEASVHAEVDPVKGVSENIMLGQLARCGTGCFDLVLDVEKCKHGMEIPQNVVMGAGIYGGGFAGSPSREFSPAHSPWNSGVTPNYSGPWSPTGGMSPSAGFSPAGNLDGGASPFNEGGWSPASPGDPLGALSPRTPAYGGMSPGVYSPASPGFSMTSPHYSPTSPSYSPTSPAHHGQSPVSPSYSPTSPSYSPTSPSYSPTSPSYSPTSPSYSPTSPSYSPTSPSYSPTSPSYSPTSPSYSPSSPRYSPTSPTYSPTSPTYSPTSPTYSPTSPTYSPTSPSYEGYSPSSPKYSPSSPTYSPTSPSYSPTSPQYSPTSPQYSPSSPTYTPSSPTYNPTSPRAFSSPQYSPTSPTYSPTSPSYTPSSPQYSPTSPTYTPSPADQPGTSNQYSPSSPTYSPSSPTYSPASPSYSPSSPTYDPQN.

Zn(2+)-binding residues include C66, C69, C76, H79, C106, C109, C149, and C177. Residues 256-268 (PAVVTFGSAKNQD) are lid loop. The rudder loop stretch occupies residues 314-331 (NCIPGLPTATQKGGRPLK). Mg(2+)-binding residues include D489, D491, and D493. The segment at 827–839 (PSEFFFHAMGGRE) is bridging helix. A Glycyl lysine isopeptide (Lys-Gly) (interchain with G-Cter in ubiquitin) cross-link involves residue K1260. Disordered regions lie at residues 1520 to 1568 (PWSP…PRTP) and 1589 to 1853 (SPHY…DPQN). Composition is skewed to low complexity over residues 1589 to 1811 (SPHY…TPSP) and 1821 to 1853 (YSPS…DPQN). 26 tandem repeats follow at residues 1592–1598 (YSPTSPS), 1599–1605 (YSPTSPA), 1616–1622 (YSPTSPS), 1623–1629 (YSPTSPS), 1630–1636 (YSPTSPS), 1637–1643 (YSPTSPS), 1644–1650 (YSPTSPS), 1651–1657 (YSPTSPS), 1658–1664 (YSPTSPS), 1665–1671 (YSPTSPS), 1679–1685 (YSPTSPT), 1686–1692 (YSPTSPT), 1693–1699 (YSPTSPT), 1700–1706 (YSPTSPT), 1707–1713 (YSPTSPS), 1717–1723 (YSPSSPK), 1724–1730 (YSPSSPT), 1731–1737 (YSPTSPS), 1752–1758 (YSPSSPT), 1759–1765 (YTPSSPT), 1779–1785 (YSPTSPT), 1786–1792 (YSPTSPS), 1800–1806 (YSPTSPT), 1821–1827 (YSPSSPT), 1828–1834 (YSPSSPT), and 1842–1848 (YSPSSPT). A C-terminal domain (CTD); 26 X 7 AA approximate tandem repeats of Y-[ST]-P-[ST]-S-P-[AGKNQRST] region spans residues 1592–1848 (YSPTSPSYSP…SPSYSPSSPT (257 aa)).

Belongs to the RNA polymerase beta' chain family. As to quaternary structure, component of the RNA polymerase II (Pol II) complex consisting of 12 subunits. Interacts with sig-7. Post-translationally, the tandem 7 residues repeats in the C-terminal domain (CTD) can be highly phosphorylated. The phosphorylation activates Pol II. Phosphorylation occurs mainly at residues 'Ser-2' and 'Ser-5' of the heptapeptide repeat and starts at the 3- to 4-cell embryonic stage. This phosphorylation also occurs in the early stages of oocyte development and is not detected in oocytes arrested at the meiotic diakinesis stage. In the somatic lineage, phosphorylation at 'Ser-2' is mediated by cdk-12 downstream of cdk-9 whereas in the germline lineage cdk-12 phosphorylates 'Ser-2' independently of cdk-9. Phosphorylation is likely mediated by cdk-7. May be dephosphorylated by fcp-1 in diakinetic oocytes and in 1-cell and 2-cell embryos. Dephosphorylated at 'Ser-5' of the heptapeptide repeat by ssup-72. The phosphorylation state is believed to result from the balanced action of site-specific CTD kinases and phosphatase, and a 'CTD code' that specifies the position of Pol II within the transcription cycle has been proposed. In terms of processing, following transcription stress, the elongating form of RNA polymerase II (RNA pol IIo) is polyubiquitinated via 'Lys-63'-linkages on Lys-1260 at DNA damage sites without leading to degradation: ubiquitination promotes RNA pol IIo backtracking to allow access by the transcription-coupled nucleotide excision repair (TC-NER) machinery. Subsequent DEF1-dependent polyubiquitination by the elongin complex via 'Lys-48'-linkages may lead to proteasome-mediated degradation; presumably at stalled RNA pol II where TC-NER has failed, to halt global transcription and enable 'last resort' DNA repair pathways.

The protein resides in the nucleus. It is found in the chromosome. The enzyme catalyses RNA(n) + a ribonucleoside 5'-triphosphate = RNA(n+1) + diphosphate. Its function is as follows. DNA-dependent RNA polymerase catalyzes the transcription of DNA into RNA using the four ribonucleoside triphosphates as substrates. Largest and catalytic component of RNA polymerase II which synthesizes mRNA precursors and many functional non-coding RNAs. Forms the polymerase active center together with the second largest subunit. Pol II is the central component of the basal RNA polymerase II transcription machinery. It is composed of mobile elements that move relative to each other. RPB1 is part of the core element with the central large cleft, the clamp element that moves to open and close the cleft and the jaws that are thought to grab the incoming DNA template. At the start of transcription, a single-stranded DNA template strand of the promoter is positioned within the central active site cleft of Pol II. A bridging helix emanates from RPB1 and crosses the cleft near the catalytic site and is thought to promote translocation of Pol II by acting as a ratchet that moves the RNA-DNA hybrid through the active site by switching from straight to bent conformations at each step of nucleotide addition. During transcription elongation, Pol II moves on the template as the transcript elongates. Elongation is influenced by the phosphorylation status of the C-terminal domain (CTD) of Pol II largest subunit (RPB1), which serves as a platform for assembly of factors that regulate transcription initiation, elongation, termination and mRNA processing. Involved in the transcription of several genes including those involved in embryogenesis. In Caenorhabditis briggsae, this protein is DNA-directed RNA polymerase II subunit RPB1.